We begin with the raw amino-acid sequence, 440 residues long: Transposon Ty1-BL Gag polyprotein (440 aa).

Composition is skewed to polar residues over residues 20 to 31 (SVTSKEVQTTQD), 46 to 55 (VSTQANSQQP), and 137 to 168 (VGTH…TNQH). 3 disordered regions span residues 20-84 (SVTS…QNGP), 137-173 (VGTH…RPPP), and 350-424 (QQES…TTEP). An RNA-binding region spans residues 299–401 (NNGIPINNKV…NSQSRTARAH (103 aa)). Residues 363–372 (SPSDEKKDSR) are compositionally biased toward basic and acidic residues. Over residues 373 to 411 (TYTNTTKPKSITRNSQKPNNSQSRTARAHNVSTFNNSPG) the composition is skewed to polar residues.

In terms of assembly, homotrimer.

The protein resides in the cytoplasm. In terms of biological role, capsid protein (CA) is the structural component of the virus-like particle (VLP), forming the shell that encapsulates the retrotransposons dimeric RNA genome. The particles are assembled from trimer-clustered units and there are holes in the capsid shells that allow for the diffusion of macromolecules. CA also has nucleocapsid-like chaperone activity, promoting primer tRNA(i)-Met annealing to the multipartite primer-binding site (PBS), dimerization of Ty1 RNA and initiation of reverse transcription. This Saccharomyces cerevisiae (strain ATCC 204508 / S288c) (Baker's yeast) protein is Transposon Ty1-BL Gag polyprotein (TY1A-BL).